A 581-amino-acid polypeptide reads, in one-letter code: 2-hydroxyacyl-CoA lyase 1 (581 aa).

Residues S4 and S6 each carry the phosphoserine modification. Position 63 (E63) interacts with thiamine diphosphate. An N6-succinyllysine mark is found at K354, K361, and K368. The interval 404–487 is thiamine pyrophosphate binding; it reads TMDIGRTMLQ…IILLVVNNNG (84 aa). The Mg(2+) site is built by D458 and N485. A Microbody targeting signal motif is present at residues 579 to 581; the sequence is SNM.

The protein belongs to the TPP enzyme family. In terms of assembly, homotetramer. Requires Mg(2+) as cofactor. It depends on thiamine diphosphate as a cofactor. In terms of tissue distribution, predominanly expressed in liver.

Its subcellular location is the peroxisome. It carries out the reaction a 2-hydroxy-3-methyl fatty acyl-CoA = a 2-methyl-branched fatty aldehyde + formyl-CoA. It catalyses the reaction an (R)-2-hydroxy-long-chain-fatty acyl-CoA = a long-chain fatty aldehyde + formyl-CoA. The enzyme catalyses 2-hydroxy-3-methylhexadecanoyl-CoA = 2-methylpentadecanal + formyl-CoA. The catalysed reaction is 2-hydroxyoctadecanoyl-CoA = heptadecanal + formyl-CoA. It carries out the reaction 2-hydroxyphytanoyl-CoA = 2,6,10,14-tetramethylpentadecanal + formyl-CoA. It participates in lipid metabolism; fatty acid metabolism. Its function is as follows. Peroxisomal 2-OH acyl-CoA lyase involved in the cleavage (C1 removal) reaction in the fatty acid alpha-oxydation in a thiamine pyrophosphate (TPP)-dependent manner. Involved in the degradation of 3-methyl-branched fatty acids like phytanic acid and the shortening of 2-hydroxy long-chain fatty acids. Plays a significant role in the biosynthesis of heptadecanal in the liver. This is 2-hydroxyacyl-CoA lyase 1 (Hacl1) from Mus musculus (Mouse).